The following is a 283-amino-acid chain: Bifunctional protein FolD (283 aa).

Residues 166–168 (GAS), Ser-191, and Ile-232 each bind NADP(+).

It belongs to the tetrahydrofolate dehydrogenase/cyclohydrolase family. Homodimer.

The catalysed reaction is (6R)-5,10-methylene-5,6,7,8-tetrahydrofolate + NADP(+) = (6R)-5,10-methenyltetrahydrofolate + NADPH. It carries out the reaction (6R)-5,10-methenyltetrahydrofolate + H2O = (6R)-10-formyltetrahydrofolate + H(+). It functions in the pathway one-carbon metabolism; tetrahydrofolate interconversion. In terms of biological role, catalyzes the oxidation of 5,10-methylenetetrahydrofolate to 5,10-methenyltetrahydrofolate and then the hydrolysis of 5,10-methenyltetrahydrofolate to 10-formyltetrahydrofolate. The polypeptide is Bifunctional protein FolD (Chromobacterium violaceum (strain ATCC 12472 / DSM 30191 / JCM 1249 / CCUG 213 / NBRC 12614 / NCIMB 9131 / NCTC 9757 / MK)).